The primary structure comprises 525 residues: Averantin hydroxylase (525 aa).

The helical transmembrane segment at 36–56 (VLATFVAGIGALLLWTLTTVF) threads the bilayer. Residue asparagine 315 is glycosylated (N-linked (GlcNAc...) asparagine). Cysteine 462 lines the heme pocket.

This sequence belongs to the cytochrome P450 family. Heme serves as cofactor.

The protein localises to the membrane. The enzyme catalyses (1'S)-averantin + reduced [NADPH--hemoprotein reductase] + O2 = (1'S,5'R)-5'-hydroxyaverantin + oxidized [NADPH--hemoprotein reductase] + H2O. The catalysed reaction is (1'S)-averantin + reduced [NADPH--hemoprotein reductase] + O2 = (1'S,5'S)-5'-hydroxyaverantin + oxidized [NADPH--hemoprotein reductase] + H2O + H(+). Its pathway is mycotoxin biosynthesis. In terms of biological role, averantin hydroxylase; part of the fragmented gene cluster that mediates the biosynthesis of dothistromin (DOTH), a polyketide toxin very similar in structure to the aflatoxin precursor, versicolorin B. The first step of the pathway is the conversion of acetate to norsolorinic acid (NOR) and requires the fatty acid synthase subunits hexA and hexB, as well as the polyketide synthase pksA. PksA combines a hexanoyl starter unit and 7 malonyl-CoA extender units to synthesize the precursor NOR. The hexanoyl starter unit is provided to the acyl-carrier protein (ACP) domain by the fungal fatty acid synthase hexA/hexB. The second step is the conversion of NOR to averantin (AVN) and requires the norsolorinic acid ketoreductase nor1, which catalyzes the dehydration of norsolorinic acid to form (1'S)-averantin. The cytochrome P450 monooxygenase avnA then catalyzes the hydroxylation of AVN to 5'hydroxyaverantin (HAVN). The next step is performed by adhA that transforms HAVN to averufin (AVF). Averufin might then be converted to hydroxyversicolorone by cypX and avfA. Hydroxyversicolorone is further converted versiconal hemiacetal acetate (VHA) by moxY. VHA is then the substrate for the versiconal hemiacetal acetate esterase est1 to yield versiconal (VAL). Versicolorin B synthase vbsA then converts VAL to versicolorin B (VERB) by closing the bisfuran ring. Then, the activity of the versicolorin B desaturase verB leads to versicolorin A (VERA). DotB, a predicted chloroperoxidase, may perform epoxidation of the A-ring of VERA. Alternatively, a cytochrome P450, such as cypX or avnA could catalyze this step. It is also possible that another, uncharacterized, cytochrome P450 enzyme is responsible for this step. Opening of the epoxide could potentially be achieved by the epoxide hydrolase epoA. However, epoA seems not to be required for DOTH biosynthesis, but other epoxide hydrolases may have the ability to complement this hydrolysis. Alternatively, opening of the epoxide ring could be achieved non-enzymatically. The next step is the deoxygenation of ring A to yield the 5,8-dihydroxyanthraquinone which is most likely catalyzed by the NADPH dehydrogenase encoded by ver1. The last stages of DOTH biosynthesis are proposed to involve hydroxylation of the bisfuran. OrdB and norB might have oxidative roles here. An alternative possibility is that cytochrome P450 monoogenases such as avnA and cypX might perform these steps in addition to previously proposed steps. This Dothistroma septosporum (strain NZE10 / CBS 128990) (Red band needle blight fungus) protein is Averantin hydroxylase.